We begin with the raw amino-acid sequence, 485 residues long: Glutathione gamma-glutamylcysteinyltransferase 1 (485 aa).

The region spanning 1-221 (MAMASLYRRS…GFMLISRPHR (221 aa)) is the Peptidase C83 domain. Active-site residues include Cys56, His162, and Asp180.

It belongs to the phytochelatin synthase family. Expressed in roots and shoots.

It catalyses the reaction [Glu(-Cys)](n)-Gly + glutathione + H(+) = [Glu(-Cys)](n+1)-Gly + glycine. Its activity is regulated as follows. Requires cadmium for activity. Also activated in vitro or in heterologous system by Ag(+), Hg(+), Zn(2+), Cu(2+), Fe(2+) or Fe(3+) ions, but not by Co(2+) or Ni(2+) ions. Its function is as follows. Involved in the synthesis of phytochelatins (PC) and homophytochelatins (hPC), the heavy-metal-binding peptides of plants. Also involved in glutathione-conjugates degradation. This is Glutathione gamma-glutamylcysteinyltransferase 1 (PCS1) from Arabidopsis thaliana (Mouse-ear cress).